The following is a 611-amino-acid chain: Threonine--tRNA ligase (611 aa).

The catalytic stretch occupies residues 211–509; the sequence is DHRKLGTELE…LTEHYAGEFP (299 aa). 3 residues coordinate Zn(2+): C310, H361, and H486.

This sequence belongs to the class-II aminoacyl-tRNA synthetase family. In terms of assembly, homodimer. Zn(2+) serves as cofactor.

The protein resides in the cytoplasm. It catalyses the reaction tRNA(Thr) + L-threonine + ATP = L-threonyl-tRNA(Thr) + AMP + diphosphate + H(+). Catalyzes the attachment of threonine to tRNA(Thr) in a two-step reaction: L-threonine is first activated by ATP to form Thr-AMP and then transferred to the acceptor end of tRNA(Thr). Also edits incorrectly charged L-seryl-tRNA(Thr). This is Threonine--tRNA ligase from Nautilia profundicola (strain ATCC BAA-1463 / DSM 18972 / AmH).